Reading from the N-terminus, the 415-residue chain is Mitogen-activated protein kinase MPS1 (415 aa).

Positions 23 to 314 constitute a Protein kinase domain; sequence YTVTKELGQG…VEQALEHPYL (292 aa). ATP contacts are provided by residues 29 to 37 and Lys52; that span reads LGQGAYGIV. A disordered region spans residues 363-394; the sequence is GAGGHGAPHAPQVPIPAGAGQGQWKAEDPRPQ.

The protein belongs to the protein kinase superfamily. Ser/Thr protein kinase family. MAP kinase subfamily. In terms of assembly, interacts with transcription factor MIG1. Interacts with transcription factor SWI6. It depends on Mg(2+) as a cofactor.

The catalysed reaction is L-seryl-[protein] + ATP = O-phospho-L-seryl-[protein] + ADP + H(+). It carries out the reaction L-threonyl-[protein] + ATP = O-phospho-L-threonyl-[protein] + ADP + H(+). In terms of biological role, mitogen-activated protein kinase; part of the MCK1-MKK2-MPS1 MAP kinase (MAPK) signal transduction cascade that is essential for cell wall integrity and plant infection, but not for plant defense responses. Beside its role in pathogenesis, the MPS1 cascade is active in conidiation and cellular stress responses. Targets downstream of the MPS1-MAPK pathway include transcription factors MIG1 and SWI6, as well as GSK1 and MPG1. The sequence is that of Mitogen-activated protein kinase MPS1 from Pyricularia oryzae (strain 70-15 / ATCC MYA-4617 / FGSC 8958) (Rice blast fungus).